A 62-amino-acid polypeptide reads, in one-letter code: Photosystem II reaction center protein Z (62 aa).

A run of 2 helical transmembrane segments spans residues 8 to 28 and 41 to 61; these read AVFA…VVFA and FSGT…NSLI.

The protein belongs to the PsbZ family. As to quaternary structure, PSII is composed of 1 copy each of membrane proteins PsbA, PsbB, PsbC, PsbD, PsbE, PsbF, PsbH, PsbI, PsbJ, PsbK, PsbL, PsbM, PsbT, PsbY, PsbZ, Psb30/Ycf12, at least 3 peripheral proteins of the oxygen-evolving complex and a large number of cofactors. It forms dimeric complexes.

It is found in the plastid. It localises to the chloroplast thylakoid membrane. May control the interaction of photosystem II (PSII) cores with the light-harvesting antenna, regulates electron flow through the 2 photosystem reaction centers. PSII is a light-driven water plastoquinone oxidoreductase, using light energy to abstract electrons from H(2)O, generating a proton gradient subsequently used for ATP formation. The chain is Photosystem II reaction center protein Z from Amborella trichopoda.